The sequence spans 709 residues: SH3 domain-containing kinase-binding protein 1 (709 aa).

2 SH3 domains span residues 1–58 (MVEA…EIKK) and 98–157 (RRRR…ELSG). 4 positions are modified to phosphoserine: Ser156, Ser159, Ser227, and Ser274. The span at 221 to 239 (ETTGSESDGGDSSSTKSEG) shows a compositional bias: low complexity. The segment at 221-242 (ETTGSESDGGDSSSTKSEGANG) is disordered. 3 disordered regions span residues 289-309 (GKKL…MDSR), 372-485 (SDFD…KIDL), and 511-650 (DSVI…VSSQ). Thr298 carries the phosphothreonine modification. The SH3 3 domain maps to 311-372 (KTKDYCKVIF…PDNFVKLLPS (62 aa)). Residues 399–434 (TERKHEIKKIPPERPETLPNRTEEKERPEREPKLDL) are compositionally biased toward basic and acidic residues. Residue Ser480 is modified to Phosphoserine. Residues 513-528 (VISSTEKLSHPTTSRP) are compositionally biased toward polar residues. Residues 535–554 (PPSQSLTSSSLSSPDIFDSP) are compositionally biased toward low complexity. 3 positions are modified to phosphoserine: Ser553, Ser555, and Ser565. Over residues 561-575 (EEHISLAHRGIDVSK) the composition is skewed to basic and acidic residues. Over residues 579 to 592 (KTVTISQVSDNKTS) the composition is skewed to polar residues. The span at 600 to 623 (MAAASSGPASLSSVASSPMSSSLG) shows a compositional bias: low complexity. The span at 627 to 636 (QRASSPSLFS) shows a compositional bias: polar residues. Position 631 is a phosphoserine (Ser631). Positions 646 to 708 (AVSSQAAIEE…VNDIKKALQS (63 aa)) form a coiled coil.

In terms of assembly, can self-associate and form homotetramers. Interacts with CD2, F-actin capping protein, PIK3R3, GRB2, EGFR, MET, BLNK, MAP3K4, PDCD6IP, SPRY2, ARHGAP17, ARHGAP27, CRK, BCAR1, SOS1, ASAP1, ARAP3, HIP1R, SYNJ2, INPP5D and STAP1. Interacts with E3 ubiquitin-protein ligase CBL. Interacts with CBLB, but does not interact with CBLC. Two molecules of SH3KBP1 seem to bind through their respective SH3 1 domain to one molecule of CBLB. The interaction with CBL or CBLB and EGFR is increased upon EGF stimulation. The interaction with CBL is attenuated by PDCD6IP. Interacts (via SH3 domains) with ARAP1. The interaction is independent of EGF and does not affect ARAP1 GTPase-activating activity but is involved in regulating ubiquitination and endocytic trafficking of EGFR. ARAP1 competes with CBL for binding to SH3KBP1 and prevents interaction of CBL with SH3KBP1; this is likely to regulate SH3KBP1-mediated internalization of EGFR. Interacts through its proline-rich region with the SH3 domain of endophilins SH3GL1, SH3GL2 and SH3GL3. The SH3KBP1-endophilin complex seems to associate with a complex containing the phosphorylated receptor (EGFR or MET) and phosphorylated CBL. Probably associates with ASAP1 and phosphorylated EGFR. Probably part of a complex consisting of at least SH3KBP1, ASAP1 and ARAP3. Interacts with focal adhesion kinases PTK2/FAK1 and PTK2B/PYK2, probably as a dimer. Interacts with DAB2 and probably associates with chathrin through its interaction with DAB2. Part of a complex consisting of SH3KBP1, DAB2, and clathrin heavy chain. DAB2 and clathrin dissociate from SH3KBP1 following growth factor treatment, enabling interaction with CBL. Interacts with DDN and probably associates with MAGI2 through its interaction with DDN. Interacts with the SH3 domains of SRC tyrosine-protein kinases SRC, LCK, LYN, FGR, FYN and HCK. Interacts with TRADD, BIRC2, TRAF1, TRAF2 and TNFR1, and the association with a TNFR1-associated complex upon stimulation with TNF-alpha seems to be mediated by SRC. Probably part of a complex consisting of at least SH3KBP1, ASAP1 and ARAP3. Interacts (via SH3 domains) with SHKBP1 (via PXXXPR motifs). Interacts with ATX2. Interaction with CBL is abolished in the presence of SHKBP1. Interacts (via SH3 domains) with ZFP36 (via extreme C-terminal region). Interacts with MAP3K4; this interaction enhances the association with ZFP36. Post-translationally, monoubiquitinated by CBL and CBLB after EGF stimulation; probably on its C-terminus.

It is found in the cytoplasm. The protein resides in the cytoskeleton. The protein localises to the cytoplasmic vesicle membrane. It localises to the synapse. Its subcellular location is the synaptosome. It is found in the cell junction. The protein resides in the focal adhesion. Its function is as follows. Adapter protein involved in regulating diverse signal transduction pathways. Involved in the regulation of endocytosis and lysosomal degradation of ligand-induced receptor tyrosine kinases, including EGFR and MET/hepatocyte growth factor receptor, through an association with CBL and endophilins. The association with CBL, and thus the receptor internalization, may be inhibited by an interaction with PDCD6IP and/or SPRY2. Involved in regulation of ligand-dependent endocytosis of the IgE receptor. Attenuates phosphatidylinositol 3-kinase activity by interaction with its regulatory subunit. May be involved in regulation of cell adhesion; promotes the interaction between TTK2B and PDCD6IP. May be involved in the regulation of cellular stress response via the MAPK pathways through its interaction with MAP3K4. Is involved in modulation of tumor necrosis factor mediated apoptosis. Plays a role in the regulation of cell morphology and cytoskeletal organization. Required in the control of cell shape and migration. Has an essential role in the stimulation of B cell activation. The polypeptide is SH3 domain-containing kinase-binding protein 1 (Sh3kbp1) (Mus musculus (Mouse)).